We begin with the raw amino-acid sequence, 420 residues long: Putative sporulation-specific glycosylase YdhD (420 aa).

LysM domains lie at 2–45 (FIHI…ALLI) and 48–92 (YVYT…KITI). Residues 100–420 (AGTLSFYVLR…LRKFFTIRKV (321 aa)) enclose the GH18 domain. Catalysis depends on E212, which acts as the Proton donor.

This sequence belongs to the glycosyl hydrolase 18 family. Chitinase class II subfamily.

The protein localises to the spore wall. This chain is Putative sporulation-specific glycosylase YdhD (ydhD), found in Bacillus subtilis (strain 168).